A 280-amino-acid chain; its full sequence is Thioredoxin-related transmembrane protein 1 (280 aa).

Positions 1-26 (MAPSGSLAVPLAVLVLLLWGAPWTHG) are cleaved as a signal peptide. Residues 27 to 132 (RRSNVRVITD…FINFISDKEW (106 aa)) form the Thioredoxin domain. At 27–180 (RRSNVRVITD…EDLGLPVWGS (154 aa)) the chain is on the extracellular side. Active-site nucleophile residues include Cys56 and Cys59. Residues Cys56 and Cys59 are joined by a disulfide bond. A helical transmembrane segment spans residues 181 to 203 (YTVFALATLFSGLLLGLCMIFVA). Residues 204-280 (DCLCPSKRRR…LGPSLATDKS (77 aa)) are Cytoplasmic-facing. S-palmitoyl cysteine attachment occurs at residues Cys205 and Cys207. Positions 218–280 (PYPSKKLLSE…LGPSLATDKS (63 aa)) are disordered. Phosphoserine is present on residues Ser228, Ser247, Ser270, Ser274, and Ser280. The span at 237 to 252 (EEQEADEEDVSEEEAE) shows a compositional bias: acidic residues.

As to quaternary structure, interacts with ATP2A2. Palmitoylated; palmitoylation is required for localization to mitochondria-associated endoplasmic reticulum membrane (MAM). Ubiquitous. Highly expressed in kidney, liver, placenta and lung.

The protein resides in the endoplasmic reticulum membrane. The protein localises to the mitochondrion membrane. It is found in the secreted. It carries out the reaction Catalyzes the rearrangement of -S-S- bonds in proteins.. In terms of biological role, thiredoxin domain-containing protein that participates in various redox reactions through the reversible oxidation of its active center dithiol to a disulfide and catalyze dithiol-disulfide exchange reactions. Acts as a key inhibitor of the alternative triglyceride biosynthesis pathway by inhibiting the activity of TMEM68/DIESL at the endoplasmic reticulum, thereby restricting accumulation of triacylglycerol. The alternative triglyceride biosynthesis pathway mediates formation of triacylglycerol from diacylglycerol and membrane phospholipids. Acts as a protein disulfide isomerase by catalyzing formation or reduction of disulfide bonds. Specifically mediates formation of disulfide bonds of transmembrane proteins at the endoplasmic reticulum membrane. Involved in endoplasmic reticulum-associated degradation (ERAD) via its protein disulfide isomerase activity by acting on folding-defective polypeptides at the endoplasmic reticulum membrane. Acts as a negative regulator of platelet aggregation following secretion in the extracellular space. Acts as a regulator of endoplasmic reticulum-mitochondria contact sites via its ability to regulate redox signals. Regulates endoplasmic reticulum-mitochondria Ca(2+) flux. In Homo sapiens (Human), this protein is Thioredoxin-related transmembrane protein 1.